A 360-amino-acid chain; its full sequence is Peptide chain release factor 1 (360 aa).

Gln-235 bears the N5-methylglutamine mark. Positions 285-313 are disordered; it reads KRQQAEASTRRNLLGSGDRSDRNRTYNFP.

This sequence belongs to the prokaryotic/mitochondrial release factor family. Methylated by PrmC. Methylation increases the termination efficiency of RF1.

Its subcellular location is the cytoplasm. Its function is as follows. Peptide chain release factor 1 directs the termination of translation in response to the peptide chain termination codons UAG and UAA. The chain is Peptide chain release factor 1 from Salmonella paratyphi A (strain ATCC 9150 / SARB42).